A 576-amino-acid chain; its full sequence is MNIFNQLKQDIIVASKQLYNNQAIANTATIDIPKDSFNGDLSSNVAMIIAAKESIAPREVALKFKEVLITLPYIASIEIAGPGFINFTIKADSWQASIKDILQHEEKFFEIDIDKSRNINIEYVSANPTGPMHIGHARGAVYGDVLARILQKVSYSVTKEYYVNDAGSQINDLVSTVLLRYKEALGEQITIPAGLYPGEYLIPLGQILAKEYGNKLLTMNYDERFKIIKSFAVEKMLDLNRKDLADLGIKHDIFFSEQSLHDKGEIEETVKLLESMGLIYEGTLPAPKGKIHEEWDNRVQKLFKSTKYGDSQDRPIEKADGSWSYFASDLAYAKDKIERGANHLIYVLGADHSGYVKRIEAIVKALGKEQVKVDVKICQLVNFVENGVPVKMSKRLGSFASVQDVNNEVGKDIIRFMMLTRQNDKPLDFDLVKVKEQSRENPIFYVQYAHVRTISILSKARELMPESYNNFESGKYDLSLLSSEEEIEIIKLLVSWTKTLEASAKYFEPHRIAFYLINLASKFHSMWNFGKENSEYRFVIESNKELTLARLALASAIQKVIASGLEVIGVEPMNKM.

The 'HIGH' region signature appears at 126–136 (ANPTGPMHIGH).

This sequence belongs to the class-I aminoacyl-tRNA synthetase family. In terms of assembly, monomer.

Its subcellular location is the cytoplasm. It carries out the reaction tRNA(Arg) + L-arginine + ATP = L-arginyl-tRNA(Arg) + AMP + diphosphate. The chain is Arginine--tRNA ligase from Rickettsia rickettsii (strain Iowa).